We begin with the raw amino-acid sequence, 126 residues long: Ribosome-binding factor A (126 aa).

The protein belongs to the RbfA family. Monomer. Binds 30S ribosomal subunits, but not 50S ribosomal subunits or 70S ribosomes.

The protein localises to the cytoplasm. One of several proteins that assist in the late maturation steps of the functional core of the 30S ribosomal subunit. Associates with free 30S ribosomal subunits (but not with 30S subunits that are part of 70S ribosomes or polysomes). Required for efficient processing of 16S rRNA. May interact with the 5'-terminal helix region of 16S rRNA. The chain is Ribosome-binding factor A from Azoarcus sp. (strain BH72).